Consider the following 1788-residue polypeptide: Genome polyprotein (1788 aa).

The segment at Met1–Arg184 is interaction with host MAP1LC3A/LC3. Residues Gly58 to Ala68 show a composition bias toward low complexity. The segment at Gly58–Val86 is disordered. Basic and acidic residues predominate over residues Gln74–Glu84. Positions Asn185–Gln399 are interaction with NTPase. The interaction with NS4 stretch occupies residues His302 to Gln399. 2 host ER membrane association regions span residues Lys319 to Asn350 and Thr361 to Gln399. An interaction with NS1-2 and NS4 and homooligomerization region spans residues Gly400–Ala575. Residues Arg533–Asp698 form the SF3 helicase domain. Residue Gly561–Thr568 participates in ATP binding. The important for mitochondrion targeting stretch occupies residues Ala652–Asp757. A functions as endoplasmic reticulum export signal region spans residues Tyr827–Gly833. Positions Arg866–Pro911 are host membrane association. The tract at residues Glu948 to Asn979 is disordered. Positions Lys965–Arg975 are enriched in basic residues. Positions Asp988 to Glu993 are acidic. Tyr991 carries the post-translational modification O-(5'-phospho-RNA)-tyrosine. Residues Trp1083–Glu1099 are interaction with host EIF4G. A Peptidase C37 domain is found at Ala1100 to Glu1280. Catalysis depends on for 3CLpro activity residues His1129, Glu1153, and Cys1238. The RdRp catalytic domain maps to Lys1515 to Lys1636. Mg(2+) contacts are provided by Asp1519, Asp1521, Asp1623, and Glu1624.

Homodimer. Homooligomer. Interacts with NTPase; this interaction increases the proapoptotic activity of the NTPase and is crucial for the formation of the viral replication complex. Interacts with NS4; this interaction is crucial for the formation of the viral replication complex. Interacts (via N-terminus) with host VAPA. Interacts with host MAP1LC3A/LC3; this interaction does not seem to be linked to host autophagy, but rather plays a role in the formation of viral factories. In terms of assembly, homooligomer. Interacts with NS1-2; this interaction increases the proapoptotic activity of the NTPase and is crucial for the formation of the viral replication complex. Interacts with NS4; this interaction increases the proapoptotic activity of the NTPase. As to quaternary structure, homodimer. Monomer; in solution. Interacts with NTPase; this interaction increases the proapoptotic activity of the NTPase. Interacts with NS1-2; this interaction is crucial for the formation of the viral replication complex. In terms of assembly, monomer. Interacts with the RNA-directed RNA polymerase; this interaction induces the multimerization of the RdRp and enhances its activity. Interacts with host IEF4G1; this interaction plays a role in translation of viral proteins. As to quaternary structure, homohexamer; also forms fibrous hexameric oligomer. Interacts with the viral genome-linked protein; this interaction induces the multimerization of the RdRp and enhances its activity. Mg(2+) serves as cofactor. Mn(2+) is required as a cofactor. Specific enzymatic cleavages in vivo yield mature proteins. 3CLpro is first autocatalytically cleaved, then processes the whole polyprotein. NS1/2-3 and NS3-4 sites are cleaved rapidly and NS4-5, NS5-6, and NS6-7 sites are processed subsequently and less efficiently. In terms of processing, VPg is uridylylated by the polymerase and is covalently attached to the 5'-end of the polyadenylated genomic and subgenomic RNAs. This uridylylated form acts as a nucleotide-peptide primer for the polymerase.

It localises to the host Golgi apparatus membrane. Its subcellular location is the host endoplasmic reticulum membrane. The enzyme catalyses a ribonucleoside 5'-triphosphate + H2O = a ribonucleoside 5'-diphosphate + phosphate + H(+). It catalyses the reaction Endopeptidase with a preference for cleavage when the P1 position is occupied by Glu-|-Xaa and the P1' position is occupied by Gly-|-Yaa.. The catalysed reaction is RNA(n) + a ribonucleoside 5'-triphosphate = RNA(n+1) + diphosphate. Induces the proliferation of the host smooth ER membranes forming long tubular structures. These remodeled membranes probably form the viral factories that contain the replication complex. May play a role in viral replication by interacting with host VAPA, a vesicle-associated membrane protein that plays a role in SNARE-mediated vesicle fusion. This interaction may target replication complex to intracellular membranes. In terms of biological role, displays NTPase activity, but no helicase activity. Induces the formation of convoluted membranes derived from the host ER. These remodeled membranes probably form the viral factories that contain the replication complex. Initiates host cell death by targeting the mitochondrial outer membrane, leading to the permeabilization of mitochondria, programmed host cell death and viral egress. Probably plays a role in preventing the assembly of host stress granules. Functionally, probable key protein responsible for the formation of membrane alterations by the virus. Induces the formation of convoluted membranes derived from the host ER. These remodeled membranes probably form the viral factories that contain the replication complex. May play a role in targeting replication complex to intracellular membranes. Its function is as follows. Viral genome-linked protein is covalently linked to the 5'-end of the positive-strand, negative-strand genomic RNAs and subgenomic RNA. Acts as a genome-linked replication primer. May recruit ribosome to viral RNA thereby promoting viral proteins translation. Interacts with host translation initiation complex to allow the translation of viral proteins. Induces the formation of aggregates of RNA-directed RNA polymerase in the presence of RNA. Through its interaction with the viral RNA-directed RNA polymerase, plays a crucial role in enhancing the polymerase activity. Processes the polyprotein. 3CLpro-RdRp is first released by autocleavage, then all other proteins are cleaved. May cleave polyadenylate-binding protein thereby inhibiting cellular translation. In terms of biological role, replicates genomic and antigenomic RNA by recognizing replications specific signals. Also transcribes a subgenomic mRNA by initiating RNA synthesis internally on antigenomic RNA. This sgRNA codes for structural proteins. Catalyzes the covalent attachment VPg with viral RNAs. This Southampton virus (strain GI/Human/United Kingdom/Southampton/1991) (SHV) protein is Genome polyprotein.